The sequence spans 83 residues: Cytochrome b559 subunit alpha (83 aa).

The chain crosses the membrane as a helical span at residues 21-35; that stretch reads VIHSITIPSLFIAGW. A heme-binding site is contributed by H23.

The protein belongs to the PsbE/PsbF family. In terms of assembly, heterodimer of an alpha subunit and a beta subunit. PSII is composed of 1 copy each of membrane proteins PsbA, PsbB, PsbC, PsbD, PsbE, PsbF, PsbH, PsbI, PsbJ, PsbK, PsbL, PsbM, PsbT, PsbX, PsbY, PsbZ, Psb30/Ycf12, at least 3 peripheral proteins of the oxygen-evolving complex and a large number of cofactors. It forms dimeric complexes. Heme b serves as cofactor.

The protein localises to the plastid. It is found in the chloroplast thylakoid membrane. Its function is as follows. This b-type cytochrome is tightly associated with the reaction center of photosystem II (PSII). PSII is a light-driven water:plastoquinone oxidoreductase that uses light energy to abstract electrons from H(2)O, generating O(2) and a proton gradient subsequently used for ATP formation. It consists of a core antenna complex that captures photons, and an electron transfer chain that converts photonic excitation into a charge separation. The sequence is that of Cytochrome b559 subunit alpha from Physcomitrium patens (Spreading-leaved earth moss).